The chain runs to 168 residues: Pathogenesis-related protein 1A (168 aa).

The N-terminal stretch at 1–30 (MGFVLFSQLPSFLLVSTLLLFLVISHSCRA) is a signal peptide. The region spanning 38–156 (LDAHNTARAD…NGGYVVSCNY (119 aa)) is the SCP domain.

This sequence belongs to the CRISP family. Post-translationally, three disulfide bonds are present.

The protein localises to the vacuole. Functionally, probably involved in the defense reaction of plants against pathogens. In Nicotiana tabacum (Common tobacco), this protein is Pathogenesis-related protein 1A.